The sequence spans 230 residues: E3 ubiquitin-protein ligase RNF114 (230 aa).

Residues 31–70 form an RING-type zinc finger; sequence CPVCLEVYEKPVQVPCGHVFCSACLQECLKPKKPVCGVCR. Cys-93 and Cys-96 together coordinate Zn(2+). The C2HC RNF-type zinc-finger motif lies at 93–112; that stretch reads CHGCRKNFFLSKIRAHVATC. Lys-104 bears the N6-acetyllysine mark. His-108 and Cys-112 together coordinate Zn(2+). Lys-114 is subject to N6-acetyllysine.

As to quaternary structure, interacts with XAF1, the interaction increases XAF1 stability and proapoptotic effects, and may regulate IFN signaling. In terms of processing, autoubiquitinated. Polyubiquitinated in the presence of E2 enzymes UBE2D1, UBE2D2 and UBE2D3, but only monoubiquitinated in the presence of UBE2E1.

The protein localises to the cytoplasm. It localises to the nucleus. It catalyses the reaction S-ubiquitinyl-[E2 ubiquitin-conjugating enzyme]-L-cysteine + [acceptor protein]-L-lysine = [E2 ubiquitin-conjugating enzyme]-L-cysteine + N(6)-ubiquitinyl-[acceptor protein]-L-lysine.. The protein operates within protein modification; protein ubiquitination. E3 ubiquitin-protein ligase that promotes the ubiquitination of various substrates. In turn, participates in the regulation of many biological processes including cell cycle, apoptosis, osteoclastogenesis as well as innate or adaptive immunity. Acts as negative regulator of NF-kappa-B-dependent transcription by promoting the ubiquitination and stabilization of the NF-kappa-B inhibitor TNFAIP3. May promote the ubiquitination of TRAF6 as well. Also acts as a negative regulator of T-cell activation. Inhibits cellular dsRNA responses and interferon production by targeting MAVS component for proteasomal degradation. Ubiquitinates the CDK inhibitor CDKN1A leading to its degradationand probably also CDKN1B and CDKN1C. This activity stimulates cell cycle G1-to-S phase transition and suppresses cellular senescence. May play a role in spermatogenesis. This chain is E3 ubiquitin-protein ligase RNF114 (RNF114), found in Bos taurus (Bovine).